Consider the following 502-residue polypeptide: Cardiolipin synthase (502 aa).

The next 3 helical transmembrane spans lie at 7–27 (VAIL…FWEG), 29–49 (LLGL…LVIS), and 59–79 (IAWL…YLLF). PLD phosphodiesterase domains are found at residues 237-264 (INFR…GDEY) and 415-442 (EKGF…DMRS). Catalysis depends on residues H242, K244, D249, H420, K422, and D427.

Belongs to the phospholipase D family. Cardiolipin synthase subfamily.

The protein resides in the cell membrane. The enzyme catalyses 2 a 1,2-diacyl-sn-glycero-3-phospho-(1'-sn-glycerol) = a cardiolipin + glycerol. Its function is as follows. Catalyzes the reversible phosphatidyl group transfer from one phosphatidylglycerol molecule to another to form cardiolipin (CL) (diphosphatidylglycerol) and glycerol. The sequence is that of Cardiolipin synthase (cls) from Geobacillus kaustophilus (strain HTA426).